The primary structure comprises 150 residues: Large ribosomal subunit protein bL9 (150 aa).

The protein belongs to the bacterial ribosomal protein bL9 family.

Functionally, binds to the 23S rRNA. The polypeptide is Large ribosomal subunit protein bL9 (Corynebacterium aurimucosum (strain ATCC 700975 / DSM 44827 / CIP 107346 / CN-1) (Corynebacterium nigricans)).